A 266-amino-acid polypeptide reads, in one-letter code: 3-methyl-2-oxobutanoate hydroxymethyltransferase (266 aa).

Mg(2+)-binding residues include D45 and D84. 3-methyl-2-oxobutanoate-binding positions include 45-46 (DS), D84, and K112. E114 contacts Mg(2+). The Proton acceptor role is filled by E181.

It belongs to the PanB family. As to quaternary structure, homodecamer; pentamer of dimers. Mg(2+) is required as a cofactor.

The protein localises to the cytoplasm. The catalysed reaction is 3-methyl-2-oxobutanoate + (6R)-5,10-methylene-5,6,7,8-tetrahydrofolate + H2O = 2-dehydropantoate + (6S)-5,6,7,8-tetrahydrofolate. It functions in the pathway cofactor biosynthesis; (R)-pantothenate biosynthesis; (R)-pantoate from 3-methyl-2-oxobutanoate: step 1/2. In terms of biological role, catalyzes the reversible reaction in which hydroxymethyl group from 5,10-methylenetetrahydrofolate is transferred onto alpha-ketoisovalerate to form ketopantoate. In Pseudomonas fluorescens (strain SBW25), this protein is 3-methyl-2-oxobutanoate hydroxymethyltransferase.